The primary structure comprises 111 residues: MFFFQGLYSSIMYVFFYIRIHTVFLRALYNSPFTALPVFKSLAVTLKAPSLLMLKIISTPLAFLIPNSINLVPKVYSFSLTTSGSSSDHSLSSSSSAFSSFGIGSKVFSSM.

Helical transmembrane passes span 7–29 (LYSSIMYVFFYIRIHTVFLRALY) and 49–71 (PSLLMLKIISTPLAFLIPNSINL).

Its subcellular location is the membrane. This is an uncharacterized protein from Saccharomyces cerevisiae (strain ATCC 204508 / S288c) (Baker's yeast).